A 221-amino-acid chain; its full sequence is Large ribosomal subunit protein bL25 (221 aa).

Positions 192–221 are disordered; the sequence is APRVEKEETEEDTVAPGDVPAENSKDADEE.

Belongs to the bacterial ribosomal protein bL25 family. CTC subfamily. In terms of assembly, part of the 50S ribosomal subunit; part of the 5S rRNA/L5/L18/L25 subcomplex. Contacts the 5S rRNA. Binds to the 5S rRNA independently of L5 and L18.

In terms of biological role, this is one of the proteins that binds to the 5S RNA in the ribosome where it forms part of the central protuberance. The polypeptide is Large ribosomal subunit protein bL25 (Idiomarina loihiensis (strain ATCC BAA-735 / DSM 15497 / L2-TR)).